Consider the following 500-residue polypeptide: MIRFKKTKLIASIAMALCLFSQPVISFSKDITDKNQSIDSGISSLSYNRNEVLASNGDKIESFVPKEGKKAGNKFIVVERQKRSLTTSPVDISIIDSVNDRTYPGALQLADKAFVENRPTILMVKRKPININIDLPGLKGENSIKVDDPTYGKVSGAIDELVSKWNEKYSSTHTLPARTQYSESMVYSKSQISSALNVNAKVLENSLGVDFNAVANNEKKVMILAYKQIFYTVSADLPKNPSDLFDDSVTFNDLKQKGVSNEAPPLMVSNVAYGRTIYVKLETTSSSKDVQAAFKALIKNTDIKNSQQYKDIYENSSFTAVVLGGDAQEHNKVVTKDFDEIRKVIKDNATFSTKNPAYPISYTSVFLKDNSVAAVHNKTDYIETTSTEYSKGKINLDHSGAYVAQFEVAWDEVSYDKEGNEVLTHKTWDGNYQDKTAHYSTVIPLEANARNIRIKARECTGLAWEWWRDVISEYDVPLTNNINVSIWGTTLYPGSSITYN.

The signal sequence occupies residues 1-28 (MIRFKKTKLIASIAMALCLFSQPVISFS). 4 consecutive transmembrane segments (beta stranded) span residues 189 to 202 (KSQI…NAKV), 209 to 218 (VDFNAVANNE), 287 to 296 (SKDVQAAFKA), and 304 to 316 (KNSQ…YENS). The Conserved undecapeptide signature appears at 458-468 (ECTGLAWEWWR). The Cholesterol binding motif lies at 490–491 (TL).

It belongs to the cholesterol-dependent cytolysin family. Homooligomeric pore complex of 35 to 50 subunits; when inserted in the host membrane.

The protein resides in the secreted. It localises to the host cell membrane. A cholesterol-dependent toxin that causes cytolysis by forming pores in cholesterol containing host membranes. After binding to target membranes, the protein assembles into a pre-pore complex. A conformation change leads to insertion in the host membrane and formation of an oligomeric pore complex. Cholesterol is required for binding to host cell membranes, membrane insertion and pore formation; cholesterol binding is mediated by a Thr-Leu pair in the C-terminus. Can be reversibly inactivated by oxidation. The polypeptide is Perfringolysin O (pfo) (Clostridium perfringens (strain ATCC 13124 / DSM 756 / JCM 1290 / NCIMB 6125 / NCTC 8237 / Type A)).